Consider the following 270-residue polypeptide: Proteasome subunit beta (270 aa).

The propeptide at 1–47 is removed in mature form; by autocatalysis; it reads MSNRGRLGDAFLRPGSSSFLDFLSDHAPELLPGRSAAAGNAPLAPHA. T48 functions as the Nucleophile in the catalytic mechanism.

It belongs to the peptidase T1B family. In terms of assembly, the 20S proteasome core is composed of 14 alpha and 14 beta subunits that assemble into four stacked heptameric rings, resulting in a barrel-shaped structure. The two inner rings, each composed of seven catalytic beta subunits, are sandwiched by two outer rings, each composed of seven alpha subunits. The catalytic chamber with the active sites is on the inside of the barrel. Has a gated structure, the ends of the cylinder being occluded by the N-termini of the alpha-subunits. Is capped by the proteasome-associated ATPase, ARC.

It localises to the cytoplasm. The catalysed reaction is Cleavage of peptide bonds with very broad specificity.. It functions in the pathway protein degradation; proteasomal Pup-dependent pathway. The formation of the proteasomal ATPase ARC-20S proteasome complex, likely via the docking of the C-termini of ARC into the intersubunit pockets in the alpha-rings, may trigger opening of the gate for substrate entry. Interconversion between the open-gate and close-gate conformations leads to a dynamic regulation of the 20S proteasome proteolysis activity. Functionally, component of the proteasome core, a large protease complex with broad specificity involved in protein degradation. This Xylanimonas cellulosilytica (strain DSM 15894 / JCM 12276 / CECT 5975 / KCTC 9989 / LMG 20990 / NBRC 107835 / XIL07) protein is Proteasome subunit beta.